The primary structure comprises 468 residues: 3-isopropylmalate dehydratase large subunit 2 (468 aa).

Positions 349, 409, and 412 each coordinate [4Fe-4S] cluster.

It belongs to the aconitase/IPM isomerase family. LeuC type 1 subfamily. In terms of assembly, heterodimer of LeuC and LeuD. It depends on [4Fe-4S] cluster as a cofactor.

It carries out the reaction (2R,3S)-3-isopropylmalate = (2S)-2-isopropylmalate. It functions in the pathway amino-acid biosynthesis; L-leucine biosynthesis; L-leucine from 3-methyl-2-oxobutanoate: step 2/4. Its function is as follows. Catalyzes the isomerization between 2-isopropylmalate and 3-isopropylmalate, via the formation of 2-isopropylmaleate. This is 3-isopropylmalate dehydratase large subunit 2 from Bradyrhizobium diazoefficiens (strain JCM 10833 / BCRC 13528 / IAM 13628 / NBRC 14792 / USDA 110).